The chain runs to 293 residues: N-acetylneuraminate lyase (293 aa).

Residues serine 47, threonine 48, and tyrosine 136 each contribute to the aceneuramate site. Tyrosine 136 (proton donor) is an active-site residue. The Schiff-base intermediate with substrate role is filled by lysine 164. Residues threonine 166, glycine 188, aspartate 190, glutamate 191, serine 207, and tyrosine 251 each coordinate aceneuramate.

This sequence belongs to the DapA family. NanA subfamily. Homotetramer.

The protein localises to the cytoplasm. The catalysed reaction is aceneuramate = aldehydo-N-acetyl-D-mannosamine + pyruvate. It participates in amino-sugar metabolism; N-acetylneuraminate degradation; D-fructose 6-phosphate from N-acetylneuraminate: step 1/5. In terms of biological role, catalyzes the reversible aldol cleavage of N-acetylneuraminic acid (sialic acid; Neu5Ac) to form pyruvate and N-acetylmannosamine (ManNAc) via a Schiff base intermediate. The chain is N-acetylneuraminate lyase from Pasteurella multocida (strain Pm70).